Consider the following 115-residue polypeptide: Holo-[acyl-carrier-protein] synthase (115 aa).

2 residues coordinate Mg(2+): Asp6 and Glu51.

This sequence belongs to the P-Pant transferase superfamily. AcpS family. Requires Mg(2+) as cofactor.

The protein localises to the cytoplasm. It carries out the reaction apo-[ACP] + CoA = holo-[ACP] + adenosine 3',5'-bisphosphate + H(+). Its function is as follows. Transfers the 4'-phosphopantetheine moiety from coenzyme A to a Ser of acyl-carrier-protein. In Campylobacter jejuni subsp. doylei (strain ATCC BAA-1458 / RM4099 / 269.97), this protein is Holo-[acyl-carrier-protein] synthase.